Here is an 88-residue protein sequence, read N- to C-terminus: Probable Fe(2+)-trafficking protein (88 aa).

This sequence belongs to the Fe(2+)-trafficking protein family.

Its function is as follows. Could be a mediator in iron transactions between iron acquisition and iron-requiring processes, such as synthesis and/or repair of Fe-S clusters in biosynthetic enzymes. This is Probable Fe(2+)-trafficking protein from Neisseria gonorrhoeae (strain ATCC 700825 / FA 1090).